A 413-amino-acid polypeptide reads, in one-letter code: Sporulation-specific protein 74 (413 aa).

Residues 1–87 (MGAGTLLNGL…SEHTDDFNDG (87 aa)) form a disordered region. Residues 69–83 (HENKDIHERSEHTDD) show a composition bias toward basic and acidic residues.

As to quaternary structure, interacts with itself. Interacts with MPC54, NUD1 and SPO21/MPC70.

It is found in the cytoplasm. The protein resides in the cytoskeleton. It localises to the microtubule organizing center. The protein localises to the spindle pole body. Involved in the pathway that organizes the shaping and sizing of the prospore membrane (PSM) during sporulation. Probable component of a core structural unit of the scaffold that initiates synthesis of the prospore membrane. The protein is Sporulation-specific protein 74 (SPO74) of Saccharomyces cerevisiae (strain ATCC 204508 / S288c) (Baker's yeast).